A 394-amino-acid chain; its full sequence is Na(+)/H(+) antiporter NhaA (394 aa).

11 consecutive transmembrane segments (helical) span residues 14-34 (AGGLILIIAAAIALLMANSAL), 59-79 (LLLWINDGLMAVFFLMIGLEV), 95-115 (VFPAIAALGGMLAPALIYLLF), 125-145 (GWAIPAATDIAFALGVMALLG), 154-174 (VFLLALAIIDDLGVIIIIALF), 179-199 (VSLQSLGIAAAAIALLAYMNW), 213-233 (LVLWVCILKSGVHATLAGVIV), 254-274 (GLHPWVAYLILPLFAFANAGV), 292-312 (IATGLFIGKPLGIFTFSWLAV), 328-348 (IFAVSVLCGIGFTMSIFIASL), and 363-383 (LGILLGSTTAAVVGYSLLRLV).

It belongs to the NhaA Na(+)/H(+) (TC 2.A.33) antiporter family.

The protein localises to the cell inner membrane. The catalysed reaction is Na(+)(in) + 2 H(+)(out) = Na(+)(out) + 2 H(+)(in). Functionally, na(+)/H(+) antiporter that extrudes sodium in exchange for external protons. The chain is Na(+)/H(+) antiporter NhaA from Yersinia pestis bv. Antiqua (strain Antiqua).